A 195-amino-acid polypeptide reads, in one-letter code: Holliday junction branch migration complex subunit RuvA (195 aa).

The domain I stretch occupies residues 1-62 (MIEFVKGPVA…EDQQTLYGFR (62 aa)). The segment at 63–141 (SRRERELFNK…ELAPDYVPNE (79 aa)) is domain II. Residues 141–145 (EGLFA) are flexible linker. The segment at 146–195 (QGASELDEACEALVALGYSEREIAKVRKALSGEILTTDAYIKRALQLLLK) is domain III.

Belongs to the RuvA family. In terms of assembly, homotetramer. Forms an RuvA(8)-RuvB(12)-Holliday junction (HJ) complex. HJ DNA is sandwiched between 2 RuvA tetramers; dsDNA enters through RuvA and exits via RuvB. An RuvB hexamer assembles on each DNA strand where it exits the tetramer. Each RuvB hexamer is contacted by two RuvA subunits (via domain III) on 2 adjacent RuvB subunits; this complex drives branch migration. In the full resolvosome a probable DNA-RuvA(4)-RuvB(12)-RuvC(2) complex forms which resolves the HJ.

Its subcellular location is the cytoplasm. The RuvA-RuvB-RuvC complex processes Holliday junction (HJ) DNA during genetic recombination and DNA repair, while the RuvA-RuvB complex plays an important role in the rescue of blocked DNA replication forks via replication fork reversal (RFR). RuvA specifically binds to HJ cruciform DNA, conferring on it an open structure. The RuvB hexamer acts as an ATP-dependent pump, pulling dsDNA into and through the RuvAB complex. HJ branch migration allows RuvC to scan DNA until it finds its consensus sequence, where it cleaves and resolves the cruciform DNA. The polypeptide is Holliday junction branch migration complex subunit RuvA (Exiguobacterium sp. (strain ATCC BAA-1283 / AT1b)).